The following is a 553-amino-acid chain: Keratin, type II cytoskeletal 73 (553 aa).

The head stretch occupies residues 1–130 (MNRQFTCKSG…DPEIQKVRAQ (130 aa)). A coil 1A region spans residues 131–166 (EREQIKALNNKFASFIDKVRFLEQQNQVLQTKWELL). One can recognise an IF rod domain in the interval 131 to 444 (EREQIKALNN…KLLEGEECRM (314 aa)). The linker 1 stretch occupies residues 167–185 (QQLDLSNCRRNLEPVYEAH). The tract at residues 186–277 (ISSLQKQLDS…CLYEGEITQM (92 aa)) is coil 1B. Positions 278-301 (QSHISDTSVVLSMDNNRNLDLDSI) are linker 12. A coil 2 region spans residues 302–440 (IAEVRAQYED…ATYRKLLEGE (139 aa)). The tail stretch occupies residues 441–539 (ECRMSGEHTN…LGSPSKKTMR (99 aa)).

This sequence belongs to the intermediate filament family. Heterotetramer of two type I and two type II keratins.

Has a role in hair formation. Specific component of keratin intermediate filaments in the inner root sheath (IRS) of the hair follicle. The polypeptide is Keratin, type II cytoskeletal 73 (Krt73) (Rattus norvegicus (Rat)).